The chain runs to 777 residues: Translation initiation factor IF-2 (777 aa).

Disordered regions lie at residues Ser30 to Asn54 and Glu98 to Glu117. Residues Glu98–Ser109 are compositionally biased toward basic and acidic residues. The 171-residue stretch at Pro279–Glu449 folds into the tr-type G domain. Residues Gly288–Thr295 form a G1 region. Gly288 to Thr295 is a binding site for GTP. A G2 region spans residues Gly313–His317. The tract at residues Asp334–Gly337 is G3. GTP-binding positions include Asp334–His338 and Asn388–Asp391. The segment at Asn388 to Asp391 is G4. The segment at Ser425 to Lys427 is G5.

Belongs to the TRAFAC class translation factor GTPase superfamily. Classic translation factor GTPase family. IF-2 subfamily.

It localises to the cytoplasm. One of the essential components for the initiation of protein synthesis. Protects formylmethionyl-tRNA from spontaneous hydrolysis and promotes its binding to the 30S ribosomal subunits. Also involved in the hydrolysis of GTP during the formation of the 70S ribosomal complex. The sequence is that of Translation initiation factor IF-2 from Wolbachia sp. subsp. Brugia malayi (strain TRS).